The primary structure comprises 208 residues: 2-phospho-L-lactate guanylyltransferase (208 aa).

This sequence belongs to the CofC family. In terms of assembly, homodimer.

The catalysed reaction is (2S)-2-phospholactate + GTP + H(+) = (2S)-lactyl-2-diphospho-5'-guanosine + diphosphate. It participates in cofactor biosynthesis; coenzyme F420 biosynthesis. Guanylyltransferase that catalyzes the activation of (2S)-2-phospholactate (2-PL) as (2S)-lactyl-2-diphospho-5'-guanosine, via the condensation of 2-PL with GTP. It is involved in the biosynthesis of coenzyme F420, a hydride carrier cofactor. This is 2-phospho-L-lactate guanylyltransferase from Methanosarcina acetivorans (strain ATCC 35395 / DSM 2834 / JCM 12185 / C2A).